A 301-amino-acid chain; its full sequence is Protoheme IX farnesyltransferase (301 aa).

The next 9 helical transmembrane spans lie at 29-49 (VVALMLLTVLVGMCLAVPGTV), 51-71 (LVPLIAGMAGIGMMAGSAAAF), 96-116 (ISIIKAISFASILGTLGFIIL), 123-143 (LTAWLTFASLIGYAVVYTAYL), 151-171 (IVVGGLAGAMPPLLGWTAVTG), 177-197 (ALLLVIIIFAWTPPHFWALAI), 223-243 (CIFLYTVLLAIACLLPVLVGM), 244-264 (CGPVYLVSSTLLSAGFIYKAW), and 281-301 (FSIYHLMLLFIALLVDHYLWV).

It belongs to the UbiA prenyltransferase family. Protoheme IX farnesyltransferase subfamily.

It localises to the cell inner membrane. The enzyme catalyses heme b + (2E,6E)-farnesyl diphosphate + H2O = Fe(II)-heme o + diphosphate. The protein operates within porphyrin-containing compound metabolism; heme O biosynthesis; heme O from protoheme: step 1/1. In terms of biological role, converts heme B (protoheme IX) to heme O by substitution of the vinyl group on carbon 2 of heme B porphyrin ring with a hydroxyethyl farnesyl side group. The polypeptide is Protoheme IX farnesyltransferase (Shewanella pealeana (strain ATCC 700345 / ANG-SQ1)).